A 421-amino-acid polypeptide reads, in one-letter code: Monopolin complex subunit mde4 (421 aa).

2 disordered regions span residues 122–158 (QKSN…NKDE) and 224–316 (DRKL…MTVS). Polar residues predominate over residues 133–149 (VSQNRLRGSLDTVSSPS). Basic and acidic residues predominate over residues 224–238 (DRKLRMQKKSTERKS). Residues 262-287 (RQPNATSGSPLSVTPFLQKTSTSIGL) show a composition bias toward polar residues. Low complexity predominate over residues 288–304 (SSSPPQSSPSAQSSQPF).

As to quaternary structure, component of a monopolin-like complex composed of pcs1 and mde4. The complex associates with the kinetochore.

The protein resides in the nucleus. Its subcellular location is the chromosome. It is found in the centromere. In terms of biological role, the monopolin-like pcs1/mde4 complex is essential for accurate chromosome segregation during mitosis and meiosis II. May clamp together microtubule binding sites on the same kinetochore, preventing merotelic attachment of microtubules. This chain is Monopolin complex subunit mde4 (mde4), found in Schizosaccharomyces pombe (strain 972 / ATCC 24843) (Fission yeast).